The sequence spans 687 residues: Geranylgeranyl transferase type-2 subunit alpha 2 (687 aa).

PFTA repeat units follow at residues 38-72 (YTKE…SRLD), 83-117 (IIDE…KKGH), 132-167 (YQKQ…LTKT), 168-203 (SEED…SLVA), and 214-248 (TIRR…QTVK). LRR repeat units lie at residues 523–545 (MNNI…VEKL), 546–567 (LFVQ…LEAM), 568–591 (QLLC…SLRH), 592–616 (LKQL…TTRY), and 646–668 (LMKL…EFSS).

This sequence belongs to the protein prenyltransferase subunit alpha family. In terms of assembly, heterotrimer composed of the alpha subunit RGTA, the beta subunit RGTB and REP; within this trimer, RGTA and RGTB form the catalytic component, while REP mediates peptide substrate binding.

The catalysed reaction is geranylgeranyl diphosphate + L-cysteinyl-[protein] = S-geranylgeranyl-L-cysteinyl-[protein] + diphosphate. Its activity is regulated as follows. The enzymatic reaction requires the aid of the Rab escort protein REP. Catalyzes the transfer of a geranylgeranyl moiety from geranylgeranyl diphosphate to both cysteines of Rab proteins with the C-terminal sequence -CCXX, CXXX, -XCCX and -XCXC, such as RABA1A, RABA2A, RABF2A and RABG2. Does not seem to be a functional Rab-GGT alpha subunit in vitro. This Arabidopsis thaliana (Mouse-ear cress) protein is Geranylgeranyl transferase type-2 subunit alpha 2.